Here is a 525-residue protein sequence, read N- to C-terminus: GMP synthase [glutamine-hydrolyzing] (525 aa).

In terms of domain architecture, Glutamine amidotransferase type-1 spans 9 to 207 (RILILDFGSQ…VLDICQCEAL (199 aa)). Catalysis depends on Cys86, which acts as the Nucleophile. Active-site residues include His181 and Glu183. One can recognise a GMPS ATP-PPase domain in the interval 208–400 (WTPATIIEDA…LGLPYDMLFR (193 aa)). 235-241 (SGGVDSS) lines the ATP pocket.

In terms of assembly, homodimer.

It carries out the reaction XMP + L-glutamine + ATP + H2O = GMP + L-glutamate + AMP + diphosphate + 2 H(+). It participates in purine metabolism; GMP biosynthesis; GMP from XMP (L-Gln route): step 1/1. Its function is as follows. Catalyzes the synthesis of GMP from XMP. In Serratia proteamaculans (strain 568), this protein is GMP synthase [glutamine-hydrolyzing].